Reading from the N-terminus, the 319-residue chain is Lipoyl synthase (319 aa).

Positions 1-32 (MVVLVDTVSSTPVRPRHPEKAARPDSLSPKKP) are disordered. Residues 16 to 32 (RHPEKAARPDSLSPKKP) show a composition bias toward basic and acidic residues. Positions 61, 66, 72, 87, 91, 94, and 300 each coordinate [4Fe-4S] cluster. One can recognise a Radical SAM core domain in the interval 73-289 (WDKKHATFMI…GKTAYAKGFL (217 aa)).

It belongs to the radical SAM superfamily. Lipoyl synthase family. It depends on [4Fe-4S] cluster as a cofactor.

It is found in the cytoplasm. The catalysed reaction is [[Fe-S] cluster scaffold protein carrying a second [4Fe-4S](2+) cluster] + N(6)-octanoyl-L-lysyl-[protein] + 2 oxidized [2Fe-2S]-[ferredoxin] + 2 S-adenosyl-L-methionine + 4 H(+) = [[Fe-S] cluster scaffold protein] + N(6)-[(R)-dihydrolipoyl]-L-lysyl-[protein] + 4 Fe(3+) + 2 hydrogen sulfide + 2 5'-deoxyadenosine + 2 L-methionine + 2 reduced [2Fe-2S]-[ferredoxin]. The protein operates within protein modification; protein lipoylation via endogenous pathway; protein N(6)-(lipoyl)lysine from octanoyl-[acyl-carrier-protein]: step 2/2. Catalyzes the radical-mediated insertion of two sulfur atoms into the C-6 and C-8 positions of the octanoyl moiety bound to the lipoyl domains of lipoate-dependent enzymes, thereby converting the octanoylated domains into lipoylated derivatives. This chain is Lipoyl synthase, found in Rhodopseudomonas palustris (strain BisB5).